We begin with the raw amino-acid sequence, 420 residues long: Probable 3-isopropylmalate dehydratase large subunit (420 aa).

3 residues coordinate [4Fe-4S] cluster: cysteine 301, cysteine 361, and cysteine 364.

The protein belongs to the aconitase/IPM isomerase family. LeuC type 2 subfamily. Heterodimer of LeuC and LeuD. Requires [4Fe-4S] cluster as cofactor.

It catalyses the reaction (2R,3S)-3-isopropylmalate = (2S)-2-isopropylmalate. It participates in amino-acid biosynthesis; L-leucine biosynthesis; L-leucine from 3-methyl-2-oxobutanoate: step 2/4. Functionally, catalyzes the isomerization between 2-isopropylmalate and 3-isopropylmalate, via the formation of 2-isopropylmaleate. The chain is Probable 3-isopropylmalate dehydratase large subunit from Methanosarcina mazei (strain ATCC BAA-159 / DSM 3647 / Goe1 / Go1 / JCM 11833 / OCM 88) (Methanosarcina frisia).